The chain runs to 663 residues: Alcohol oxidase 1 (663 aa).

FAD is bound at residue D8–E38. Catalysis depends on H567, which acts as the Proton acceptor. The short motif at A661–F663 is the Microbody targeting signal element.

It belongs to the GMC oxidoreductase family. As to quaternary structure, homooctamer. The cofactor is FAD.

It localises to the peroxisome matrix. It catalyses the reaction a primary alcohol + O2 = an aldehyde + H2O2. It functions in the pathway energy metabolism; methane degradation. In terms of biological role, major isoform of alcohol oxidase, which catalyzes the oxidation of methanol to formaldehyde and hydrogen peroxide, the first step in the methanol utilization pathway of methylotrophic yeasts. The sequence is that of Alcohol oxidase 1 (AOX1) from Komagataella phaffii (strain ATCC 76273 / CBS 7435 / CECT 11047 / NRRL Y-11430 / Wegner 21-1) (Yeast).